A 284-amino-acid chain; its full sequence is Nucleotide-binding protein Sden_0486 (284 aa).

8-15 serves as a coordination point for ATP; it reads GRSGSGKS. 56-59 provides a ligand contact to GTP; the sequence is DVRN.

This sequence belongs to the RapZ-like family.

Its function is as follows. Displays ATPase and GTPase activities. This Shewanella denitrificans (strain OS217 / ATCC BAA-1090 / DSM 15013) protein is Nucleotide-binding protein Sden_0486.